A 121-amino-acid chain; its full sequence is Large ribosomal subunit protein uL14c (121 aa).

Belongs to the universal ribosomal protein uL14 family. Part of the 50S ribosomal subunit.

The protein localises to the plastid. It localises to the chloroplast. Functionally, binds to 23S rRNA. The polypeptide is Large ribosomal subunit protein uL14c (Pelargonium hortorum (Common geranium)).